Reading from the N-terminus, the 142-residue chain is Large ribosomal subunit protein uL11 (142 aa).

It belongs to the universal ribosomal protein uL11 family. Part of the ribosomal stalk of the 50S ribosomal subunit. Interacts with L10 and the large rRNA to form the base of the stalk. L10 forms an elongated spine to which L12 dimers bind in a sequential fashion forming a multimeric L10(L12)X complex. One or more lysine residues are methylated.

Its function is as follows. Forms part of the ribosomal stalk which helps the ribosome interact with GTP-bound translation factors. This chain is Large ribosomal subunit protein uL11, found in Rhizobium meliloti (strain 1021) (Ensifer meliloti).